A 1187-amino-acid chain; its full sequence is Protein WWC2 (1187 aa).

2 WW domains span residues 10-43 (LPLP…DPRD) and 57-90 (DELP…DPRK). 2 coiled-coil regions span residues 121 to 194 (KEQR…YKQQ) and 224 to 256 (ELKS…FHLD). Residue Ser-286 is modified to Phosphoserine. Residues 302-423 (LAEKVRLSLQ…EETTKLTTSL (122 aa)) adopt a coiled-coil conformation. The disordered stretch occupies residues 438–464 (SSGSSLGSLASSRGSLNTSSRGSLNSL). Positions 697–820 (ETAQVQIGLR…FSNEIFMLWY (124 aa)) constitute a C2 domain. Disordered regions lie at residues 830–849 (CKKN…QPML) and 874–963 (ELAQ…ETNT). Positions 859-885 (ALLARTSAELLAVEQELAQEEEEEELR) form a coiled coil. Positions 875–884 (LAQEEEEEEL) are enriched in acidic residues. Thr-999 is subject to Phosphothreonine. Residue Ser-1017 is modified to Phosphoserine. Positions 1026 to 1045 (SLFVRNSTERRSLRVKRAVC) are interaction with PRKCZ. The stretch at 1063 to 1143 (DLELDLQASL…DLNAERLMRQ (81 aa)) forms a coiled coil.

Belongs to the WWC family. Forms homodimers and heterodimers with WWC1 and WWC3. Interacts with DLC1 and PRKCZ. Interacts (via WW domains) with LATS1 and LATS2.

The protein localises to the cytoplasm. The protein resides in the cytosol. Regulator of the Hippo signaling pathway, also known as the Salvador-Warts-Hippo (SWH) pathway. Enhances phosphorylation of LATS1 and YAP1 and negatively regulates cell proliferation and organ growth due to a suppression of the transcriptional activity of YAP1, the major effector of the Hippo pathway. This is Protein WWC2 (Wwc2) from Mus musculus (Mouse).